Consider the following 357-residue polypeptide: 3-isopropylmalate dehydrogenase (357 aa).

Residues R97, R107, R135, and D224 each coordinate substrate. The Mg(2+) site is built by D224, D248, and D252. 282–294 is a binding site for NAD(+); that stretch reads GSAPDIAGQDKAN.

This sequence belongs to the isocitrate and isopropylmalate dehydrogenases family. LeuB type 1 subfamily. In terms of assembly, homodimer. Requires Mg(2+) as cofactor. It depends on Mn(2+) as a cofactor.

The protein localises to the cytoplasm. It catalyses the reaction (2R,3S)-3-isopropylmalate + NAD(+) = 4-methyl-2-oxopentanoate + CO2 + NADH. It participates in amino-acid biosynthesis; L-leucine biosynthesis; L-leucine from 3-methyl-2-oxobutanoate: step 3/4. In terms of biological role, catalyzes the oxidation of 3-carboxy-2-hydroxy-4-methylpentanoate (3-isopropylmalate) to 3-carboxy-4-methyl-2-oxopentanoate. The product decarboxylates to 4-methyl-2 oxopentanoate. This Parasynechococcus marenigrum (strain WH8102) protein is 3-isopropylmalate dehydrogenase.